Consider the following 670-residue polypeptide: ATP synthase subunit alpha 2 (670 aa).

180–187 (GDRATGKT) contributes to the ATP binding site. Residues 525 to 670 (MPAEDAAGDI…DAEAEARHKR (146 aa)) are disordered. Residues 543–588 (ARGDADRDADHGANREVSREVSPEASREVSREVSREVSHEADRDAA) are compositionally biased toward basic and acidic residues. Over residues 589–599 (ADAARVAGRAP) the composition is skewed to low complexity. A compositionally biased stretch (basic and acidic residues) spans 621–639 (ADGDRASASRPPPDARGDA). Over residues 650–661 (ADANVNADANVD) the composition is skewed to low complexity.

The protein belongs to the ATPase alpha/beta chains family. F-type ATPases have 2 components, CF(1) - the catalytic core - and CF(0) - the membrane proton channel. CF(1) has five subunits: alpha(3), beta(3), gamma(1), delta(1), epsilon(1). CF(0) has three main subunits: a(1), b(2) and c(9-12). The alpha and beta chains form an alternating ring which encloses part of the gamma chain. CF(1) is attached to CF(0) by a central stalk formed by the gamma and epsilon chains, while a peripheral stalk is formed by the delta and b chains.

It localises to the cell inner membrane. The catalysed reaction is ATP + H2O + 4 H(+)(in) = ADP + phosphate + 5 H(+)(out). Its function is as follows. Produces ATP from ADP in the presence of a proton gradient across the membrane. The alpha chain is a regulatory subunit. The sequence is that of ATP synthase subunit alpha 2 from Burkholderia mallei (strain NCTC 10247).